The sequence spans 147 residues: uncharacterized protein (147 aa).

This sequence to M.jannaschii MJ1086 N-terminal region.

This is an uncharacterized protein from Methanocaldococcus jannaschii (strain ATCC 43067 / DSM 2661 / JAL-1 / JCM 10045 / NBRC 100440) (Methanococcus jannaschii).